A 547-amino-acid chain; its full sequence is (R)-citramalate synthase (547 aa).

The Pyruvate carboxyltransferase domain maps to 8 to 278; sequence LWLYDTTLRD…YDCIEPEKLA (271 aa).

It belongs to the alpha-IPM synthase/homocitrate synthase family.

The catalysed reaction is pyruvate + acetyl-CoA + H2O = (3R)-citramalate + CoA + H(+). It participates in amino-acid biosynthesis; L-isoleucine biosynthesis; 2-oxobutanoate from pyruvate: step 1/3. In terms of biological role, catalyzes the condensation of pyruvate and acetyl-coenzyme A to form (R)-citramalate. The chain is (R)-citramalate synthase from Synechocystis sp. (strain ATCC 27184 / PCC 6803 / Kazusa).